Consider the following 65-residue polypeptide: Stress-associated endoplasmic reticulum protein 2 (65 aa).

Residues 38 to 58 traverse the membrane as a helical segment; the sequence is GPWLLALFVFVVCGSAIFQII.

Belongs to the RAMP4 family. In terms of assembly, interacts with SEC61B, SEC61A1 and the SEC61 complex. Interacts with CANX.

It is found in the membrane. The protein localises to the endoplasmic reticulum membrane. Interacts with target proteins during their translocation into the lumen of the endoplasmic reticulum. Protects unfolded target proteins against degradation during ER stress. May facilitate glycosylation of target proteins after termination of ER stress. May modulate the use of N-glycosylation sites on target proteins. The protein is Stress-associated endoplasmic reticulum protein 2 (SERP2) of Bos taurus (Bovine).